The chain runs to 285 residues: Hypersensitive-induced response protein 3 (285 aa).

The N-myristoyl glycine moiety is linked to residue glycine 2. Coiled-coil stretches lie at residues 113 to 139 (NLDDVFEQKNEIAKSVEEELDKAMTAY) and 165 to 185 (NAAARMRVAASEKAEAEKIIQ).

In terms of assembly, self-interacts and forms heteromers. Interacts with NB-LRR class of R proteins before R proteins (e.g. RPS2 or RPM1) are activated by the effectors.

It localises to the cell membrane. The polypeptide is Hypersensitive-induced response protein 3 (HIR3) (Arabidopsis thaliana (Mouse-ear cress)).